A 719-amino-acid polypeptide reads, in one-letter code: MSDHLGSSHDEGELSDESHKKSQRASSSDEPNPAKSNKGLESKMRESILSRLSKRKNSESDDDTTEQRFSIQPKNAQKAKEDRYRDKERDKKREKDKRDDRRDVRGPDARQKDRDFKGRQERSGRDQKVHEHRHHHHHRKHETDGHRTNRSNRDRSSERDSEKHKRHIDRHKKSSTTSPDNDKSPHKKSKHTDVPADAKLFDRILDPNYKKKDDDVLVIEDVEMSPIEILEEKEEKEIVEFTIDSPAGPKKYSKFESDPESDHDDTKPKSPGKAEDDDDVIEVLDDALHSDDDADSDEDKYLKTPEDREWEEMTETEQRLHKEAMKKRASMKQKTLIAQLPVFYPGLMGCRNIDEYECVNRVDEGTFGVVYRGKDKRTDEIVALKRLKMEKEKEGFPITALREINMLLKAGNHPNIVNVKEILLGSNMDKIYMAMEFVEHDMKSLLDTMSRRNKRFSIGEQKTLLQQLLSGIEHMHKLWILHRDLKTSNLLMSHKGILKIADFGLAREYGDPLKKFTSIVVTLWYRSPELLLGTRLYSTPVDMWSVGCIMAEFILLKPLFPGRGELEQIKKIFMEMGTPTESIWPGVTELDGWKALTFEKYPYNQLRKRFLAGRLLNDTGFKLLNGLLTLDPKNRFSATQALDHEWFTEEPYPVPPEEFPTFPAKSEQNKAPPPAKQKQQENRISHVDPETAKLLKQFEVRPEQVKPGGFSLKFDPTRF.

3 stretches are compositionally biased toward basic and acidic residues: residues 1–20 (MSDH…ESHK), 38–48 (KGLESKMRESI), and 78–129 (KAKE…DQKV). Disordered regions lie at residues 1-215 (MSDH…KDDD) and 231-315 (EEKE…EMTE). Over residues 130–140 (HEHRHHHHHRK) the composition is skewed to basic residues. Basic and acidic residues predominate over residues 141-163 (HETDGHRTNRSNRDRSSERDSEK). The span at 164 to 174 (HKRHIDRHKKS) shows a compositional bias: basic residues. Basic and acidic residues-rich tracts occupy residues 191–215 (HTDV…KDDD) and 264–274 (DDTKPKSPGKA). The span at 275–285 (EDDDDVIEVLD) shows a compositional bias: acidic residues. Residues 356–647 (YECVNRVDEG…ATQALDHEWF (292 aa)) form the Protein kinase domain. ATP is bound by residues 362-370 (VDEGTFGVV) and K385. The Proton acceptor role is filled by D484. The interval 657-689 (EEFPTFPAKSEQNKAPPPAKQKQQENRISHVDP) is disordered. The span at 678 to 689 (KQQENRISHVDP) shows a compositional bias: basic and acidic residues.

This sequence belongs to the protein kinase superfamily. CMGC Ser/Thr protein kinase family. CDC2/CDKX subfamily. As to expression, broadly expressed in somatic and germ line cells (at protein level). Not expressed in sperm (at protein level).

The protein resides in the nucleus. It carries out the reaction L-seryl-[protein] + ATP = O-phospho-L-seryl-[protein] + ADP + H(+). It catalyses the reaction L-threonyl-[protein] + ATP = O-phospho-L-threonyl-[protein] + ADP + H(+). In terms of biological role, probable cyclin-dependent kinase whose activity is most likely regulated by the cyclin cyl-1/Cylin-L. Important for normal oocyte and sperm development; probably required during multiple stages of gametogenesis. Plays a role in the activation of RAS-ERK signaling in the germ line. Also acts partially redundantly with cdk-11.2 to ensure embryonic viability. The sequence is that of Cyclin-dependent kinase 11.1 from Caenorhabditis elegans.